A 34-amino-acid chain; its full sequence is Mu-theraphotoxin-Df1a (34 aa).

Intrachain disulfides connect C2–C16, C9–C21, and C15–C28. F34 carries the phenylalanine amide modification.

This sequence belongs to the neurotoxin 10 (Hwtx-1) family. 54 (ProTx-1) subfamily. Post-translationally, C-terminal amidation is important for the high potency of the toxin. In terms of tissue distribution, expressed by the venom gland.

It is found in the secreted. In terms of biological role, inhibits sodium channel Nav1.7/SCN9A with high potency (IC(50)=117 nM) and Nav1.2/SCN2A, Nav1.3/SCN3A, Nav1.6/SCN8A and Nav1.5/SCN5 with weaker potency. Also inhibits voltage-gated calcium channel Cav3.1/CACNA1G, Cav3.2/CACNA1H and Cav3.3/CACNA1I. The chain is Mu-theraphotoxin-Df1a from Davus fasciatus (Costa Rican tiger rump).